The primary structure comprises 1798 residues: Non-reducing polyketide synthase nscA (1798 aa).

Residues Arg25 to His256 are N-terminal acylcarrier protein transacylase domain (SAT). Residues Ser392–Asp825 form the Ketosynthase family 3 (KS3) domain. Active-site for beta-ketoacyl synthase activity residues include Cys565, His700, and His743. Residues Phe931–Pro1224 form a malonyl-CoA:ACP transacylase (MAT) domain region. Positions His1322–Ala1458 are N-terminal hotdog fold. Residues His1322–Asp1632 form the PKS/mFAS DH domain. Catalysis depends on His1354, which acts as the Proton acceptor; for dehydratase activity. Residues His1390 to Arg1628 form a product template (PT) domain region. The tract at residues Ala1486 to Asp1632 is C-terminal hotdog fold. Asp1543 (proton donor; for dehydratase activity) is an active-site residue. Residues Leu1695 to Pro1721 are disordered. In terms of domain architecture, Carrier spans Pro1721–Cys1798. Position 1758 is an O-(pantetheine 4'-phosphoryl)serine (Ser1758).

Pantetheine 4'-phosphate serves as cofactor.

The protein operates within secondary metabolite biosynthesis. Functionally, non-reducing polyketide synthase; part of the gene cluster that mediates the biosynthesis of neosartoricin B, a prenylated anthracenone that probably exhibits T-cell antiproliferative activity, suggestive of a physiological role as an immunosuppressive agent. The non-reducing polyketide synthase nscA probably synthesizes and cyclizes the decaketide backbone. The hydrolase nscB then mediates the product release through hydrolysis followed by spontaneous decarboxylation. The prenyltransferase nscD catalyzes the addition of the dimethylallyl group to the aromatic C5. The FAD-dependent monooxygenase nscC is then responsible for the stereospecific hydroxylation at C2. Neosartoricin B can be converted into two additional compounds neosartoricins C and D. Neosartoricin C is a spirocyclic compound that is cyclized through the attack of C3 hydroxyl on C14, followed by dehydration. On the other hand, neosartoricin D is a further cyclized compound in which attack of C2 on C14 in neosartoricin C results in the formation of the acetal-containing dioxabicyclo-octanone ring. Both of these compounds are novel and possibly represent related metabolites of the gene cluster. The sequence is that of Non-reducing polyketide synthase nscA from Trichophyton rubrum (strain ATCC MYA-4607 / CBS 118892) (Athlete's foot fungus).